The sequence spans 71 residues: Putative membrane protein insertion efficiency factor (71 aa).

The protein belongs to the UPF0161 family.

It is found in the cell membrane. Its function is as follows. Could be involved in insertion of integral membrane proteins into the membrane. In Clostridium acetobutylicum (strain ATCC 824 / DSM 792 / JCM 1419 / IAM 19013 / LMG 5710 / NBRC 13948 / NRRL B-527 / VKM B-1787 / 2291 / W), this protein is Putative membrane protein insertion efficiency factor.